A 205-amino-acid polypeptide reads, in one-letter code: Meiotic nuclear division protein 1 homolog (205 aa).

Position 2 is an N-acetylserine (Ser-2). A coiled-coil region spans residues 84–173; that stretch reads HKLEVLESQL…EAANRWTDNI (90 aa).

The protein belongs to the MND1 family. Heterodimer with PSMC3IP/HOP2. MND1-PSMC3IP interacts with DMC1 and RAD51 and binds preferentially to dsDNA.

It is found in the nucleus. In terms of biological role, required for proper homologous chromosome pairing and efficient cross-over and intragenic recombination during meiosis. Stimulates both DMC1- and RAD51-mediated homologous strand assimilation, which is required for the resolution of meiotic double-strand breaks. In Homo sapiens (Human), this protein is Meiotic nuclear division protein 1 homolog.